We begin with the raw amino-acid sequence, 449 residues long: RNA binding protein fox-1 homolog 2 (449 aa).

Residues 1 to 21 (MAEGGQAQQQPPQLGPGAAAR) are compositionally biased toward low complexity. Residues 1–186 (MAEGGQAQQQ…STPKRLHVSN (186 aa)) are disordered. 2 stretches are compositionally biased toward polar residues: residues 77-86 (QGNQEPTTTP) and 118-138 (YAGQ…PHGE). Positions 139 to 176 (QSSNSPSNQNGSLTQTEGGAQTDGQQSQTQSSENSESK) are enriched in low complexity. In terms of domain architecture, RRM spans 180–256 (KRLHVSNIPF…RKIEVNNATA (77 aa)). Omega-N-methylarginine is present on residues Arg-236, Gly-241, Tyr-268, and Lys-273. Residues Glu-285 and Pro-317 each carry the asymmetric dimethylarginine modification. Residues Leu-318, Leu-323, Ala-336, Arg-340, and Gly-341 each carry the omega-N-methylarginine modification. An asymmetric dimethylarginine mark is found at Arg-356 and Arg-388. 2 positions are modified to asymmetric dimethylarginine; alternate: Arg-440 and Arg-445. Residues Arg-440 and Arg-445 each carry the omega-N-methylarginine; alternate modification.

In terms of assembly, interacts with ER-alpha N-terminal activation domain. Interacts with RBPMS; the interaction allows cooperative assembly of stable cell-specific alternative splicing regulatory complexes. As to expression, detected in brain neurons (at protein level). Detected in heart, brain, embryo, lung, liver, kidney and ovary.

Its subcellular location is the nucleus. The protein resides in the cytoplasm. RNA-binding protein that regulates alternative splicing events by binding to 5'-UGCAUGU-3' elements. Prevents binding of U2AF2 to the 3'-splice site. Regulates alternative splicing of tissue-specific exons and of differentially spliced exons during erythropoiesis. Seems to act as a coregulatory factor of ER-alpha. Together with RNA binding proteins RBPMS and MBNL1/2, activates vascular smooth muscle cells alternative splicing events. This Mus musculus (Mouse) protein is RNA binding protein fox-1 homolog 2 (Rbfox2).